Reading from the N-terminus, the 234-residue chain is Adenosine 5'-phosphosulfate reductase (234 aa).

[4Fe-4S] cluster-binding residues include C120, C121, C203, and C206. Catalysis depends on C229, which acts as the Nucleophile; cysteine thiosulfonate intermediate.

Belongs to the PAPS reductase family. CysH subfamily. The cofactor is [4Fe-4S] cluster.

It is found in the cytoplasm. It carries out the reaction [thioredoxin]-disulfide + sulfite + AMP + 2 H(+) = adenosine 5'-phosphosulfate + [thioredoxin]-dithiol. It functions in the pathway sulfur metabolism; hydrogen sulfide biosynthesis; sulfite from sulfate. In terms of biological role, catalyzes the formation of sulfite from adenosine 5'-phosphosulfate (APS) using thioredoxin as an electron donor. The chain is Adenosine 5'-phosphosulfate reductase from Bacillus cereus (strain ZK / E33L).